The primary structure comprises 499 residues: Interferon regulatory factor 5 (499 aa).

The Nuclear localization signal motif lies at 12–18 (PRRVRLK). Positions 14-122 (RVRLKPWLVA…QPYKVYEVCS (109 aa)) form a DNA-binding region, IRF tryptophan pentad repeat. The tract at residues 121–142 (CSNGPAPAESQPSEDNAEEEEE) is disordered. The Nuclear export signal signature appears at 145-155 (LQKMLPGLSIT). Phosphoserine; by TBK1 occurs at positions 153 and 294. A Phosphoserine modification is found at Ser-302. Glycyl lysine isopeptide (Lys-Gly) (interchain with G-Cter in ubiquitin) cross-links involve residues Lys-412 and Lys-413. Residues Ser-432, Ser-436, Ser-438, Ser-441, and Ser-447 each carry the phosphoserine modification.

This sequence belongs to the IRF family. In terms of assembly, homodimer, when phosphorylated. Interacts with TASL (via pLxIS motif); interaction takes place downstream of TLR7, TLR8 or TLR9, leading to its activation. Interacts with MYD88 and TRAF6. In terms of processing, phosphorylation of serine and threonine residues by IKBKB in a C-terminal autoinhibitory region, stimulates dimerization, transport into the nucleus, assembly with the coactivator CBP/EP300 and initiation of transcription. 'Lys-63'-linked polyubiquitination by TRAF6 is required for activation.

Its subcellular location is the cytoplasm. It is found in the nucleus. With respect to regulation, maintained as a monomer in an autoinhibited state. Phosphorylation and activation follow the following steps: innate adapter protein TASL recruits IRF5, thereby licensing IRF5 for phosphorylation by IKBKB. Phosphorylated IRF5 dissociates from the adapter proteins, dimerizes, and then enters the nucleus to induce IFNs. Its function is as follows. Transcription factor that plays a critical role in innate immunity by activating expression of type I interferon (IFN) IFNA and INFB and inflammatory cytokines downstream of endolysosomal toll-like receptors TLR7, TLR8 and TLR9. Regulates the transcription of type I IFN genes (IFN-alpha and IFN-beta) and IFN-stimulated genes (ISG) by binding to an interferon-stimulated response element (ISRE) in their promoters. Can efficiently activate both the IFN-beta (IFNB) and the IFN-alpha (IFNA) genes and mediate their induction downstream of the TLR-activated, MyD88-dependent pathway. The chain is Interferon regulatory factor 5 from Bos taurus (Bovine).